Reading from the N-terminus, the 305-residue chain is tRNA-cytidine(32) 2-sulfurtransferase (305 aa).

Residues 1 to 20 form a disordered region; that stretch reads MTAVLPLPHPLADPAPRDPR. A PP-loop motif motif is present at residues 59 to 64; sequence SGGKDS. [4Fe-4S] cluster contacts are provided by cysteine 134, cysteine 137, and cysteine 225. Residues 282 to 293 are compositionally biased toward low complexity; sequence DAPPDLAPDPGA. Residues 282–305 form a disordered region; it reads DAPPDLAPDPGAWLTASDATHDSD.

Belongs to the TtcA family. Homodimer. Mg(2+) serves as cofactor. Requires [4Fe-4S] cluster as cofactor.

Its subcellular location is the cytoplasm. The catalysed reaction is cytidine(32) in tRNA + S-sulfanyl-L-cysteinyl-[cysteine desulfurase] + AH2 + ATP = 2-thiocytidine(32) in tRNA + L-cysteinyl-[cysteine desulfurase] + A + AMP + diphosphate + H(+). It participates in tRNA modification. In terms of biological role, catalyzes the ATP-dependent 2-thiolation of cytidine in position 32 of tRNA, to form 2-thiocytidine (s(2)C32). The sulfur atoms are provided by the cysteine/cysteine desulfurase (IscS) system. This Xanthomonas oryzae pv. oryzae (strain PXO99A) protein is tRNA-cytidine(32) 2-sulfurtransferase.